Here is a 974-residue protein sequence, read N- to C-terminus: GATOR2 complex protein WDR59 (974 aa).

7 WD repeats span residues 57–98 (QSKW…GEVG), 103–143 (GHTR…KPTV), 146–185 (SAVA…TAVE), 189–229 (AHLS…KYLN), 232–276 (PCQV…TPVH), 278–318 (FVGH…RVDS), and 319–362 (QMQR…TASH). The disordered stretch occupies residues 350 to 374 (HTEDTDHQHTASHGEEEALKEDPPR). Positions 393 to 494 (QEFSLINVQI…RQLVSCLESF (102 aa)) constitute an RWD domain. Serine 564 carries the post-translational modification Phosphoserine. The WD 8 repeat unit spans residues 668 to 706 (LNVNDIQETCQKNAASALLVGRKDLVQVWSLATVATDLC). Phosphoserine is present on residues serine 821, serine 822, and serine 830. The disordered stretch occupies residues 831 to 852 (LTYSDPRERERDQHDKNKRLLD). Residues 835–851 (DPRERERDQHDKNKRLL) are compositionally biased toward basic and acidic residues. Residues 901-920 (YCSHCRSEVRGTQCAICKGF) form a C4-type zinc finger. 13 residues coordinate Zn(2+): cysteine 902, cysteine 905, cysteine 914, cysteine 917, cysteine 927, cysteine 938, histidine 943, histidine 946, histidine 949, cysteine 960, cysteine 964, cysteine 966, and cysteine 968. The segment at 921-973 (TFQCAICHVAVRGSSNFCLTCGHGGHTSHMMEWFRTQEVCPTGCGCHCLLEST) adopts an RING-type; atypical zinc-finger fold.

The protein belongs to the WD repeat WDR59 family. Component of the GATOR2 subcomplex, composed of MIOS, SEC13, SEH1L, WDR24 and WDR59. The GATOR2 complex interacts with CASTOR1 and CASTOR2; the interaction is negatively regulated by arginine. The GATOR2 complex interacts with SESN1, SESN2 and SESN3; the interaction is negatively regulated by amino acids. Interacts with DDB1-CUL4A/B E3 ligase complexes.

It localises to the lysosome membrane. The GATOR2 complex is negatively regulated by the upstream amino acid sensors CASTOR1 and SESN2, which sequester the GATOR2 complex in absence of amino acids. In the presence of abundant amino acids, GATOR2 is released from CASTOR1 and SESN2 and activated. Functionally, as a component of the GATOR2 complex, functions as an activator of the amino acid-sensing branch of the mTORC1 signaling pathway. The GATOR2 complex indirectly activates mTORC1 through the inhibition of the GATOR1 subcomplex. GATOR2 probably acts as an E3 ubiquitin-protein ligase toward GATOR1. In the presence of abundant amino acids, the GATOR2 complex mediates ubiquitination of the NPRL2 core component of the GATOR1 complex, leading to GATOR1 inactivation. In the absence of amino acids, GATOR2 is inhibited, activating the GATOR1 complex. This Homo sapiens (Human) protein is GATOR2 complex protein WDR59.